Here is a 119-residue protein sequence, read N- to C-terminus: Large ribosomal subunit protein bL17 (119 aa).

Belongs to the bacterial ribosomal protein bL17 family. In terms of assembly, part of the 50S ribosomal subunit. Contacts protein L32.

In Ureaplasma parvum serovar 3 (strain ATCC 27815 / 27 / NCTC 11736), this protein is Large ribosomal subunit protein bL17.